Consider the following 495-residue polypeptide: Aspartyl/glutamyl-tRNA(Asn/Gln) amidotransferase subunit B (495 aa).

Belongs to the GatB/GatE family. GatB subfamily. As to quaternary structure, heterotrimer of A, B and C subunits.

The enzyme catalyses L-glutamyl-tRNA(Gln) + L-glutamine + ATP + H2O = L-glutaminyl-tRNA(Gln) + L-glutamate + ADP + phosphate + H(+). It catalyses the reaction L-aspartyl-tRNA(Asn) + L-glutamine + ATP + H2O = L-asparaginyl-tRNA(Asn) + L-glutamate + ADP + phosphate + 2 H(+). Its function is as follows. Allows the formation of correctly charged Asn-tRNA(Asn) or Gln-tRNA(Gln) through the transamidation of misacylated Asp-tRNA(Asn) or Glu-tRNA(Gln) in organisms which lack either or both of asparaginyl-tRNA or glutaminyl-tRNA synthetases. The reaction takes place in the presence of glutamine and ATP through an activated phospho-Asp-tRNA(Asn) or phospho-Glu-tRNA(Gln). In Acinetobacter baylyi (strain ATCC 33305 / BD413 / ADP1), this protein is Aspartyl/glutamyl-tRNA(Asn/Gln) amidotransferase subunit B.